The primary structure comprises 1008 residues: Collagen alpha-1(I) chain (1008 aa).

Positions 1–1008 (GGISVPGPMG…PGPPGPPGPP (1008 aa)) are disordered. Residues P18, P21, P23, P32, P35, P38, P52, P67, P73, P82, and P88 each carry the 4-hydroxyproline modification. Positions 55-69 (NGDDGEAGKPGRPGE) are enriched in basic and acidic residues. K91 carries the post-translational modification 5-hydroxylysine; alternate. K91 carries an O-linked (Gal...) hydroxylysine; alternate glycan. At S97 the chain carries Phosphoserine. Residues 105–121 (DAGPAGPKGEPGSPGEN) show a composition bias toward low complexity. Residues P115, P118, P124, P133, P139, P160, P169, P172, P199, P202, P214, P220, P229, P235, and P238 each carry the 4-hydroxyproline modification. A compositionally biased stretch (low complexity) spans 139–157 (PGASGPAGARGNDGAAGAA). The span at 159 to 171 (PPGPTGPAGPPGF) shows a compositional bias: pro residues. Over residues 205–235 (AGAAGPAGNPGADGQPGAKGANGAPGIAGAP) the composition is skewed to low complexity. The segment covering 236-255 (GFPGRGPSGPQGPSGPGPKG) has biased composition (gly residues). 5-hydroxylysine is present on K254. 4-hydroxyproline is present on residues P260, P263, P275, P284, P299, P305, P314, and P320. Residues 309-318 (GERGGPGSRG) show a composition bias toward gly residues. K329 is modified (5-hydroxylysine). 28 positions are modified to 4-hydroxyproline: P338, P347, P353, P359, P368, P371, P380, P389, P395, P407, P416, P425, P428, P446, P463, P469, P475, P481, P487, P493, P505, P514, P523, P535, P538, P544, P550, and P559. The span at 362-388 (KGLTGSPGSPGPDGKTGPPGPAGQDGR) shows a compositional bias: low complexity. Low complexity predominate over residues 397–416 (ARGQAGVMGFPGPKGAAGEP). Positions 475–484 (PGEAGKPGEQ) are enriched in low complexity. The segment covering 519–547 (PRGAPGNDGAKGDAGAPGAPGSQGAPGLQ) has biased composition (low complexity). At K571 the chain carries 5-hydroxylysine. 4-hydroxyproline occurs at positions 577, 592, and 598. Positions 604–618 (SGPSGPAGPTGARGA) are enriched in low complexity. S607 bears the Phosphoserine mark. Residues P619, P625, P628, P637, P643, P661, P670, and P679 each carry the 4-hydroxyproline modification. The span at 631–658 (AGFAGPPGADGQPGAKGEPGDAGAKGDA) shows a compositional bias: low complexity. Residues 660–672 (PPGPAGPTGPPGP) are compositionally biased toward pro residues. Position 682 is a 5-hydroxylysine (K682). Residues 687–703 (SAGPPGATGFPGAAGRV) are compositionally biased toward low complexity. 2 positions are modified to 4-hydroxyproline: P691 and P697. P705 carries the post-translational modification 3-hydroxyproline. 15 positions are modified to 4-hydroxyproline: P706, P717, P738, P747, P755, P764, P781, P790, P793, P799, P814, P820, P826, P835, and P841. Over residues 731–740 (ETGPAGRPGE) the composition is skewed to low complexity. Over residues 752–764 (KGSPGADGPAGAP) the composition is skewed to low complexity. Residues 813–823 (PPGPVGPPGLA) are compositionally biased toward pro residues. The segment covering 825 to 840 (PPGESGREGSPGAEGS) has biased composition (low complexity). Residue K850 is modified to 5-hydroxylysine. Residues 858–873 (PGPPGAPGAPGAPGPV) show a composition bias toward pro residues. 3 positions are modified to 4-hydroxyproline: P861, P864, and P867. Positions 894-908 (AGPAGARGPAGPQGP) are enriched in low complexity. Over residues 909–923 (RGDKGETGEQGDRGI) the composition is skewed to basic and acidic residues. K912 bears the 5-hydroxylysine mark. K924 is subject to 5-hydroxylysine; alternate. Residue K924 is glycosylated (O-linked (Gal...) hydroxylysine; alternate). P939, P942, P960, and P975 each carry 4-hydroxyproline. The segment covering 942 to 975 (PGEQGPSGASGPAGPRGPPGSAGSPGKDGLNGLP) has biased composition (low complexity). P980 is subject to 3-hydroxyproline. P981 is modified (4-hydroxyproline). Residues 993 to 1008 (VGPPGPPGPPGPPGPP) show a composition bias toward pro residues. P995 bears the 3-hydroxyproline mark. P996 carries the post-translational modification 4-hydroxyproline. 3-hydroxyproline is present on P998. P999 bears the 4-hydroxyproline mark. Position 1001 is a 3-hydroxyproline (P1001). 3 positions are modified to 4-hydroxyproline: P1002, P1005, and P1008.

It belongs to the fibrillar collagen family. Trimers of one alpha 2(I) and two alpha 1(I) chains. Post-translationally, contains mostly 4-hydroxyproline. Proline residues at the third position of the tripeptide repeating unit (G-X-Y) are hydroxylated in some or all of the chains. In terms of processing, contains 3-hydroxyproline at a few sites. This modification occurs on the first proline residue in the sequence motif Gly-Pro-Hyp, where Hyp is 4-hydroxyproline. Lysine residues at the third position of the tripeptide repeating unit (G-X-Y) are 5-hydroxylated in some or all of the chains. Post-translationally, O-glycosylated on hydroxylated lysine residues. The O-linked glycan consists of a Glc-Gal disaccharide. As to expression, expressed in bones.

Its subcellular location is the secreted. The protein resides in the extracellular space. The protein localises to the extracellular matrix. Functionally, type I collagen is a member of group I collagen (fibrillar forming collagen). This is Collagen alpha-1(I) chain from Paramylodon harlani (Harlan's ground sloth).